The following is a 239-amino-acid chain: Biosynthetic peptidoglycan transglycosylase (239 aa).

Residues 29–49 (GMFGLGALMLVWIVAYAVVPV) form a helical membrane-spanning segment.

It belongs to the glycosyltransferase 51 family.

It is found in the cell inner membrane. It catalyses the reaction [GlcNAc-(1-&gt;4)-Mur2Ac(oyl-L-Ala-gamma-D-Glu-L-Lys-D-Ala-D-Ala)](n)-di-trans,octa-cis-undecaprenyl diphosphate + beta-D-GlcNAc-(1-&gt;4)-Mur2Ac(oyl-L-Ala-gamma-D-Glu-L-Lys-D-Ala-D-Ala)-di-trans,octa-cis-undecaprenyl diphosphate = [GlcNAc-(1-&gt;4)-Mur2Ac(oyl-L-Ala-gamma-D-Glu-L-Lys-D-Ala-D-Ala)](n+1)-di-trans,octa-cis-undecaprenyl diphosphate + di-trans,octa-cis-undecaprenyl diphosphate + H(+). The protein operates within cell wall biogenesis; peptidoglycan biosynthesis. Peptidoglycan polymerase that catalyzes glycan chain elongation from lipid-linked precursors. The protein is Biosynthetic peptidoglycan transglycosylase of Jannaschia sp. (strain CCS1).